Consider the following 393-residue polypeptide: tRNA(Met) cytidine acetate ligase (393 aa).

ATP contacts are provided by Gly81, Asn142, and Arg167.

The protein belongs to the TmcAL family.

It is found in the cytoplasm. It catalyses the reaction cytidine(34) in elongator tRNA(Met) + acetate + ATP = N(4)-acetylcytidine(34) in elongator tRNA(Met) + AMP + diphosphate. Catalyzes the formation of N(4)-acetylcytidine (ac(4)C) at the wobble position of elongator tRNA(Met), using acetate and ATP as substrates. First activates an acetate ion to form acetyladenylate (Ac-AMP) and then transfers the acetyl group to tRNA to form ac(4)C34. This chain is tRNA(Met) cytidine acetate ligase, found in Bacillus thuringiensis subsp. konkukian (strain 97-27).